Consider the following 384-residue polypeptide: 8-amino-7-oxononanoate synthase (384 aa).

Residue Arg21 coordinates substrate. 108-109 (GF) is a pyridoxal 5'-phosphate binding site. Residue His133 participates in substrate binding. Pyridoxal 5'-phosphate contacts are provided by Ser179, His207, and Thr233. Lys236 is subject to N6-(pyridoxal phosphate)lysine. Residue Thr352 coordinates substrate.

It belongs to the class-II pyridoxal-phosphate-dependent aminotransferase family. BioF subfamily. In terms of assembly, homodimer. Pyridoxal 5'-phosphate is required as a cofactor.

The catalysed reaction is 6-carboxyhexanoyl-[ACP] + L-alanine + H(+) = (8S)-8-amino-7-oxononanoate + holo-[ACP] + CO2. It functions in the pathway cofactor biosynthesis; biotin biosynthesis. In terms of biological role, catalyzes the decarboxylative condensation of pimeloyl-[acyl-carrier protein] and L-alanine to produce 8-amino-7-oxononanoate (AON), [acyl-carrier protein], and carbon dioxide. This is 8-amino-7-oxononanoate synthase from Shigella dysenteriae serotype 1 (strain Sd197).